A 531-amino-acid polypeptide reads, in one-letter code: UDP-glucuronosyltransferase 1A5 (531 aa).

Residues 1–25 (MGLHVTLQGLAGLLLLLYALPWAEG) form the signal peptide. Residues Asn-116, Asn-131, Asn-139, Asn-293, and Asn-431 are each glycosylated (N-linked (GlcNAc...) asparagine). The chain crosses the membrane as a helical span at residues 489-505 (VIGFLLAIVLTVVFIVY).

The protein belongs to the UDP-glycosyltransferase family. As to quaternary structure, homodimer. Homooligomer. Interacts with UGT1A1, UGT1A3, UGT1A4, UGT1A6, UGT1A7, UGT1A8, UGT1A9 and UGT1A10 to form heterodimers.

It is found in the endoplasmic reticulum membrane. The catalysed reaction is glucuronate acceptor + UDP-alpha-D-glucuronate = acceptor beta-D-glucuronoside + UDP + H(+). It carries out the reaction zolasartan + UDP-alpha-D-glucuronate = zolarsartan-1-N-beta-D-glucuronide + UDP. Functionally, UDP-glucuronosyltransferase (UGT) that catalyzes phase II biotransformation reactions in which lipophilic substrates are conjugated with glucuronic acid to increase the metabolite's water solubility, thereby facilitating excretion into either the urine or bile. Essential for the elimination and detoxification of drugs, xenobiotics and endogenous compounds. Involved in the glucuronidation of the AGTR1 angiotensin receptor antagonist zolarsatan, a drug which can inhibit the effect of angiotensin II. In Rattus norvegicus (Rat), this protein is UDP-glucuronosyltransferase 1A5.